The chain runs to 337 residues: 1,4-dihydroxy-2-naphthoyl-CoA synthase, peroxisomal (337 aa).

Residues 97–98 (RR), Lys133, 137–141 (SGGDQ), 181–185 (YAVGG), Thr207, and Ser213 contribute to the substrate site. 206-208 (QTG) contacts hydrogencarbonate.

Belongs to the enoyl-CoA hydratase/isomerase family. MenB subfamily. In terms of assembly, homohexamer. The cofactor is hydrogencarbonate.

It is found in the peroxisome. It catalyses the reaction 2-succinylbenzoyl-CoA + H(+) = 1,4-dihydroxy-2-naphthoyl-CoA + H2O. Its function is as follows. Involved in the biosynthesis of phylloquinone (vitamin K1). Converts o-succinylbenzoyl-CoA (OSB-CoA) to 1,4-dihydroxy-2-naphthoyl-CoA (DHNA-CoA). The chain is 1,4-dihydroxy-2-naphthoyl-CoA synthase, peroxisomal (MENB) from Arabidopsis thaliana (Mouse-ear cress).